The following is a 78-amino-acid chain: Large ribosomal subunit protein eL38 (78 aa).

The protein belongs to the eukaryotic ribosomal protein eL38 family. Component of the large ribosomal subunit. Mature ribosomes consist of a small (40S) and a large (60S) subunit. The 40S subunit contains about 32 different proteins and 1 molecule of RNA (18S). The 60S subunit contains 45 different proteins and 3 molecules of RNA (25S, 5.8S and 5S).

It localises to the cytoplasm. Component of the ribosome, a large ribonucleoprotein complex responsible for the synthesis of proteins in the cell. The small ribosomal subunit (SSU) binds messenger RNAs (mRNAs) and translates the encoded message by selecting cognate aminoacyl-transfer RNA (tRNA) molecules. The large subunit (LSU) contains the ribosomal catalytic site termed the peptidyl transferase center (PTC), which catalyzes the formation of peptide bonds, thereby polymerizing the amino acids delivered by tRNAs into a polypeptide chain. The nascent polypeptides leave the ribosome through a tunnel in the LSU and interact with protein factors that function in enzymatic processing, targeting, and the membrane insertion of nascent chains at the exit of the ribosomal tunnel. In Candida albicans (strain SC5314 / ATCC MYA-2876) (Yeast), this protein is Large ribosomal subunit protein eL38.